We begin with the raw amino-acid sequence, 462 residues long: MLGLTQHAQKVWRMKPFSPEVSPGSSPATAGHLLRISTLFLTLLELAQVCRGSVVSNRPFITVWNGDTHWCLTEYGVDVDVSVFDVVANKEQSFQGSNMTIFYREELGTYPYYTPTGEPVFGGLPQNASLVTHLAHTFQDIKAAMPEPDFSGLAVIDWEAWRPRWAFNWDSKDIYRQRSMELVQAEHPDWPETLVEAAAKNQFQEAAEAWMAGTLQLGQVLRPRGLWGYYGFPDCYNNDFLSLNYTGQCPVFVRDQNDQLGWLWNQSYALYPSIYLPAALMGTEKSQMYVRHRVQEALRVAIVSRDPHVPVMPYVQIFYEMTDYLLPLEELEHSLGESAAQGVAGAVLWLSSDKTSTKESCQAIKAYMDSTLGPFIVNVTSAALLCSEALCSGHGRCVRHPSYPEALLTLNPASFSIELTHDGRPPSLKGTLSLKDRAQMAMKFRCRCYRGWRGKWCDKRGM.

A signal peptide spans 1-52 (MLGLTQHAQKVWRMKPFSPEVSPGSSPATAGHLLRISTLFLTLLELAQVCRG). Cystine bridges form between cysteine 71–cysteine 361 and cysteine 235–cysteine 249. 2 N-linked (GlcNAc...) asparagine glycosylation sites follow: asparagine 98 and asparagine 127. The active-site Proton donor is the glutamate 159. Residues asparagine 244, asparagine 265, and asparagine 378 are each glycosylated (N-linked (GlcNAc...) asparagine). 3 disulfides stabilise this stretch: cysteine 386–cysteine 397, cysteine 391–cysteine 446, and cysteine 448–cysteine 457. Positions 446–457 (CRCYRGWRGKWC) constitute an EGF-like domain.

Belongs to the glycosyl hydrolase 56 family. As to expression, highly expressed in liver, kidney, lung and skin.

It localises to the secreted. It is found in the lysosome. It catalyses the reaction Random hydrolysis of (1-&gt;4)-linkages between N-acetyl-beta-D-glucosamine and D-glucuronate residues in hyaluronate.. May have a role in promoting tumor progression. May block the TGFB1-enhanced cell growth. This is Hyaluronidase-1 (Hyal1) from Mus musculus (Mouse).